The chain runs to 364 residues: MRWLVCLIVSWCSLVPLGATVGQSLNSGDPCQTPSGTAGTCEPVKNCSYVRKILKSPDFSHYDTTYLDTLKCGDLMVPMRKKPIPLLCCPKFSNSPTCGAQQLADRIYFGEETERGAHPWAALLFYNVGRNRTVPKCGGALISERYVITAAHCTVDKPNWKLLYVRFNEFNTSSADNCTTENDEVICREDYAVESIVPHPEYDMHNISRPNDICILRLASDVTFNDYVRPICLPFDPDVQQLPIVDEIFTVTGWGETEDRRPSDTQKHVELPGLEHEACNSVYAVANVTLSDKQLCIGGLNGSDSCRGDSGGPLMREVRGGWFLIGVVSFGARFCGTQNLPGVYTNVAKYLDWMETVMFVERYL.

Residues 1–19 (MRWLVCLIVSWCSLVPLGA) form the signal peptide. The 60-residue stretch at 30 to 89 (PCQTPSGTAGTCEPVKNCSYVRKILKSPDFSHYDTTYLDTLKCGDLMVPMRKKPIPLLCC) folds into the Clip domain. Intrachain disulfides connect C31-C88, C41-C72, and C47-C89. N-linked (GlcNAc...) asparagine glycosylation occurs at N46. One can recognise a Peptidase S1 domain in the interval 107–359 (IYFGEETERG…YLDWMETVMF (253 aa)). An N-linked (GlcNAc...) asparagine glycan is attached at N131. C137 and C153 are oxidised to a cystine. H152 acts as the Charge relay system in catalysis. Residues N171, N177, and N206 are each glycosylated (N-linked (GlcNAc...) asparagine). Catalysis depends on D212, which acts as the Charge relay system. Residues C279 and C296 are joined by a disulfide bond. N-linked (GlcNAc...) asparagine glycans are attached at residues N287 and N301. A disulfide bond links C306 and C335. The Charge relay system role is filled by S310.

The protein belongs to the peptidase S1 family. CLIP subfamily. Post-translationally, N-glycosylated. In terms of processing, proteolytically cleaved. As to expression, expressed by a subpopulation of hemocytes.

Its subcellular location is the secreted. In terms of biological role, serine protease. Plays a role in innate immunity against infections by parasite P.berghei and by Gram-negative bacteria such as E.coli. In response to P.berghei infection, contributes to the clearing of parasite ookinetes independent of melanization, an innate immune response which consists in the deposition of melanin pigments on invading pathogens and parasites. This is CLIP domain-containing serine protease B15 from Anopheles gambiae (African malaria mosquito).